A 501-amino-acid polypeptide reads, in one-letter code: HMG-box protein STE11 (501 aa).

Positions 142–153 are enriched in polar residues; the sequence is PVNMVGSLSGSP. Disordered stretches follow at residues 142–205 and 246–293; these read PVNM…KRPL and YAEM…SLEQ. Residues 192-204 show a composition bias toward low complexity; that stretch reads SRSGSSSSGIKRP. The HMG box DNA-binding region spans 201–265; sequence IKRPLNSFML…RHAKEYPDYK (65 aa). The segment covering 246–263 has biased composition (basic and acidic residues); it reads YAEMAQRERERHAKEYPD.

Phosphorylated by MAPK2.

Its subcellular location is the nucleus. The sequence is that of HMG-box protein STE11 from Pneumocystis carinii.